We begin with the raw amino-acid sequence, 194 residues long: Translation machinery-associated protein 22 (194 aa).

The SUI1 domain occupies 102–173 (VQIKRVERNK…DVQEWLLEVY (72 aa)).

It belongs to the DENR family. Interacts with the 40S ribosomal subunit.

It localises to the cytoplasm. The polypeptide is Translation machinery-associated protein 22 (tma22) (Aspergillus clavatus (strain ATCC 1007 / CBS 513.65 / DSM 816 / NCTC 3887 / NRRL 1 / QM 1276 / 107)).